The following is a 461-amino-acid chain: MKEFDTITAVATPVGEGGISIIRISGDKSLDIVSSIFKGKNDRSLDDIKPYSMRYGFIIEKESKEIIDEVLVSYMKGPRSFTAEDTLEINCHGGVIPTKKILKELIKSGARLAEPGEFTKRAFLNGRIDLSQAEAVIDIIRSKTDLSMKSALKQAEGTLSKEINSIRNRMIKIIAHIEATVDYPEDDLEEITGQKIKVDLKEIINKIDNLISASEEGKILREGLNTVIVGKPNVGKSSLLNALINENKAIVTEIPGTTRDVIEEYINIDGIPIKIVDTAGIRETEDVVEKIGVEKSKEKIDEADLVIFMLDLSRKIDEEDIEIMDFIKNKKYIVLLNKLDLNKDLNEENHFIKELDSKYIIKTSVKNNSGLNELKECIKNLFFSGEIKSDELIVTNARHQEALIRSRESCIQAIETLSDEISIDLASIDIRNAWKYLGEITGDTLDENIIDKIFSEFCLGK.

The (6S)-5-formyl-5,6,7,8-tetrahydrofolate site is built by Arg23, Glu88, and Arg127. Residues Gly223–Phe383 form the TrmE-type G domain. Residue Asn233 coordinates K(+). GTP-binding positions include Asn233–Ser238, Thr252–Thr258, and Asp277–Gly280. Ser237 lines the Mg(2+) pocket. Residues Thr252, Ile254, and Thr257 each contribute to the K(+) site. Mg(2+) is bound at residue Thr258. Residue Lys461 coordinates (6S)-5-formyl-5,6,7,8-tetrahydrofolate.

It belongs to the TRAFAC class TrmE-Era-EngA-EngB-Septin-like GTPase superfamily. TrmE GTPase family. Homodimer. Heterotetramer of two MnmE and two MnmG subunits. The cofactor is K(+).

Its subcellular location is the cytoplasm. In terms of biological role, exhibits a very high intrinsic GTPase hydrolysis rate. Involved in the addition of a carboxymethylaminomethyl (cmnm) group at the wobble position (U34) of certain tRNAs, forming tRNA-cmnm(5)s(2)U34. This Clostridium botulinum (strain Loch Maree / Type A3) protein is tRNA modification GTPase MnmE.